The chain runs to 213 residues: Major fimbrial subunit (213 aa).

An N-terminal signal peptide occupies residues 1-20; sequence MKKTLLGSLILLAFAGNVQA. The cysteines at positions 41 and 81 are disulfide-linked.

This sequence belongs to the fimbrial protein family.

It localises to the fimbrium. Mediates adherence to oropharyngeal epithelial cells. Helps the airway colonization process. This Haemophilus influenzae protein is Major fimbrial subunit (hifA).